Reading from the N-terminus, the 245-residue chain is Adenosylcobinamide-GDP ribazoletransferase (245 aa).

Transmembrane regions (helical) follow at residues 31 to 51 (FGRAVLCYPLVGVLIGVVLYA), 61 to 81 (PLLQAALLLSLWVALSGALHL), 113 to 133 (VAVVVLVLVLLLKFSALAALL), 138 to 158 (AGLLPLAPWLARSSLPLLFLT), and 192 to 212 (LAFGLAGLLALLVTLMLFAWL).

This sequence belongs to the CobS family. The cofactor is Mg(2+).

It localises to the cell inner membrane. The enzyme catalyses alpha-ribazole + adenosylcob(III)inamide-GDP = adenosylcob(III)alamin + GMP + H(+). It catalyses the reaction alpha-ribazole 5'-phosphate + adenosylcob(III)inamide-GDP = adenosylcob(III)alamin 5'-phosphate + GMP + H(+). The protein operates within cofactor biosynthesis; adenosylcobalamin biosynthesis; adenosylcobalamin from cob(II)yrinate a,c-diamide: step 7/7. Joins adenosylcobinamide-GDP and alpha-ribazole to generate adenosylcobalamin (Ado-cobalamin). Also synthesizes adenosylcobalamin 5'-phosphate from adenosylcobinamide-GDP and alpha-ribazole 5'-phosphate. This is Adenosylcobinamide-GDP ribazoletransferase from Pseudomonas aeruginosa (strain ATCC 15692 / DSM 22644 / CIP 104116 / JCM 14847 / LMG 12228 / 1C / PRS 101 / PAO1).